We begin with the raw amino-acid sequence, 217 residues long: Homologous-pairing protein 2 homolog (217 aa).

A coiled-coil region spans residues 93–153; sequence IVALTAKVQS…LKNIKAATNH (61 aa). A DNA-binding region spans residues 118–182; sequence SSALTTPEMQ…WRKRKRMATE (65 aa).

Belongs to the HOP2 family. In terms of assembly, interacts with the DNA-binding domain of the nuclear receptors NR3C1/GR, ESR2/ER-beta, THRB and RXRA. Forms a stable heterodimer with MND1. Interacts with PSMC3/TBP1. Post-translationally, PTM: Phosphorylated by PKA, PKC and MAPK. Highly expressed in testis and colon.

The protein localises to the nucleus. Plays an important role in meiotic recombination. Stimulates DMC1-mediated strand exchange required for pairing homologous chromosomes during meiosis. The complex PSMC3IP/MND1 binds DNA, stimulates the recombinase activity of DMC1 as well as DMC1 D-loop formation from double-strand DNA. This complex stabilizes presynaptic RAD51 and DMC1 filaments formed on single strand DNA to capture double-strand DNA. This complex stimulates both synaptic and presynaptic critical steps in RAD51 and DMC1-promoted homologous pairing. May inhibit HIV-1 viral protein TAT activity and modulate the activity of proteasomes through association with PSMC3. Acts as a tissue specific coactivator of hormone-dependent transcription mediated by nuclear receptors. In Homo sapiens (Human), this protein is Homologous-pairing protein 2 homolog (PSMC3IP).